The following is a 351-amino-acid chain: Protein FAM118B (351 aa).

Alanine 2 carries the post-translational modification N-acetylalanine. Phosphoserine is present on serine 9.

It belongs to the FAM118 family.

It localises to the nucleus. It is found in the cajal body. May play a role in Cajal bodies formation. In Homo sapiens (Human), this protein is Protein FAM118B (FAM118B).